Here is a 380-residue protein sequence, read N- to C-terminus: Chaperone protein DnaJ (380 aa).

Positions 5–70 (DFYDVLGVNR…QKRAAYDQYG (66 aa)) constitute a J domain. The segment at 139–217 (GCEKQIRIPT…CHGAGRVKSQ (79 aa)) adopts a CR-type zinc-finger fold. 8 residues coordinate Zn(2+): cysteine 152, cysteine 155, cysteine 169, cysteine 172, cysteine 191, cysteine 194, cysteine 205, and cysteine 208. 4 CXXCXGXG motif repeats span residues 152-159 (CSHCHGSG), 169-176 (CPTCGGAG), 191-198 (CPTCHGSG), and 205-212 (CNICHGAG).

This sequence belongs to the DnaJ family. In terms of assembly, homodimer. The cofactor is Zn(2+).

It is found in the cytoplasm. Functionally, participates actively in the response to hyperosmotic and heat shock by preventing the aggregation of stress-denatured proteins and by disaggregating proteins, also in an autonomous, DnaK-independent fashion. Unfolded proteins bind initially to DnaJ; upon interaction with the DnaJ-bound protein, DnaK hydrolyzes its bound ATP, resulting in the formation of a stable complex. GrpE releases ADP from DnaK; ATP binding to DnaK triggers the release of the substrate protein, thus completing the reaction cycle. Several rounds of ATP-dependent interactions between DnaJ, DnaK and GrpE are required for fully efficient folding. Also involved, together with DnaK and GrpE, in the DNA replication of plasmids through activation of initiation proteins. This is Chaperone protein DnaJ from Laribacter hongkongensis (strain HLHK9).